Reading from the N-terminus, the 491-residue chain is MSELFKLTLSDITAKLKAREVSAVELATEGLALCEAAQPKLNAFTAFDADKTLAMAKASDEKLARGEGGLIEGAPLAIKDLFAVEGVETAASSNILKGFKPTYESSVTAKLWENGGVFLCKTSMDEFAMGSSNETSNTGPVNNPWKGANGEMLTPGGSSGGSAAAVAADLCFGATGTDTGGSIRQPAAFTGTVGVKATYGRTSRWGAVAFASSLDHPGPFAKTVKDSALMLQAMSGHDPKDSTSLPNDVPDFVAAVGQSVKGLRIGVPKEYRVDGMPAEIDEAWQKGIDWLKAAGCEIVDISLPHTKYALPAYYIVAPAEASSNLARYDGMRYGNRVEGTNLNATYENTRGAGFGHEVQRRIMIGTYVLSAGYYDAYYLRAQKVRTRILQDFEQAFEKVDAVLTPSAPSAAFALGSKSDDPIAMYLNDVFTVTANLAGLPAMSVPAGVDKDGLPLGLQIITPALDEETMFKVGAAIEDSAGFVAKPENWWA.

Catalysis depends on charge relay system residues lysine 79 and serine 158. The Acyl-ester intermediate role is filled by serine 182.

This sequence belongs to the amidase family. GatA subfamily. Heterotrimer of A, B and C subunits.

The catalysed reaction is L-glutamyl-tRNA(Gln) + L-glutamine + ATP + H2O = L-glutaminyl-tRNA(Gln) + L-glutamate + ADP + phosphate + H(+). Functionally, allows the formation of correctly charged Gln-tRNA(Gln) through the transamidation of misacylated Glu-tRNA(Gln) in organisms which lack glutaminyl-tRNA synthetase. The reaction takes place in the presence of glutamine and ATP through an activated gamma-phospho-Glu-tRNA(Gln). This is Glutamyl-tRNA(Gln) amidotransferase subunit A from Maricaulis maris (strain MCS10) (Caulobacter maris).